The sequence spans 530 residues: Type 2 DNA topoisomerase 6 subunit B (530 aa).

ATP contacts are provided by residues N42, D76, 97-98 (SK), 106-113 (GMYGLGVK), and K427.

This sequence belongs to the TOP6B family. As to quaternary structure, homodimer. Heterotetramer of two Top6A and two Top6B chains.

The catalysed reaction is ATP-dependent breakage, passage and rejoining of double-stranded DNA.. Its function is as follows. Relaxes both positive and negative superturns and exhibits a strong decatenase activity. This chain is Type 2 DNA topoisomerase 6 subunit B, found in Saccharolobus islandicus (strain Y.N.15.51 / Yellowstone #2) (Sulfolobus islandicus).